The sequence spans 335 residues: Proline-rich protein 1 (335 aa).

The first 22 residues, 1 to 22 (MAITRASFAICILLSLATIATA), serve as a signal peptide directing secretion. Repeat copies occupy residues 30–34 (PPVYT), 35–39 (SPVNK), 40–43 (PTLP), 44–48 (PPVYT), 49–53 (PPVHK), 54–57 (PTLP), 58–62 (PPVYT), 63–67 (PPVHK), 68–71 (PTLS), 72–76 (PPVYT), 77–81 (KPTLP), 82–86 (PPAYT), 87–91 (PPVYN), 92–96 (KPTLP), 97–101 (APVYT), 102–106 (PPVYK), 107–110 (PTLS), 111–115 (PPVYT), 116–120 (KPTLL), 121–125 (PPVFK), 126–130 (PTLSP), 131–135 (PVYTK), 136–139 (PTLS), 140–144 (PTVYK), 145–148 (PTLS), 149–153 (PPVNN), 154–158 (KPSLS), 159–163 (PPVYK), 164–167 (PTLS), 168–172 (PPVYT), 173–177 (KPTLP), 178–182 (PPVYK), 184–189 (SPSYSP), 190–194 (PPPFA), 195–200 (PKPTYT), 201–207 (PPTKPYV), 208–212 (PEIIK), 284–288 (SPVET), and 319–323 (PFYFT). The 39 X 5 AA approximate repeats stretch occupies residues 30-323 (PPVYTSPVNK…LFNVGPFYFT (294 aa)).

The protein belongs to the plant proline-rich protein superfamily. ENOD12 family. In terms of tissue distribution, exclusively expressed in roots, especially in root hairs.

It localises to the secreted. The protein localises to the cell wall. Functionally, may contribute to cell wall structure in root hairs. This Arabidopsis thaliana (Mouse-ear cress) protein is Proline-rich protein 1 (PRP1).